Reading from the N-terminus, the 283-residue chain is Pantothenate synthetase (283 aa).

Position 30–37 (M30–H37) interacts with ATP. H37 functions as the Proton donor in the catalytic mechanism. Position 61 (Q61) interacts with (R)-pantoate. A beta-alanine-binding site is contributed by Q61. G149 to D152 is an ATP binding site. Q155 is a binding site for (R)-pantoate. L186 to R189 serves as a coordination point for ATP.

This sequence belongs to the pantothenate synthetase family. Homodimer.

It is found in the cytoplasm. It carries out the reaction (R)-pantoate + beta-alanine + ATP = (R)-pantothenate + AMP + diphosphate + H(+). It participates in cofactor biosynthesis; (R)-pantothenate biosynthesis; (R)-pantothenate from (R)-pantoate and beta-alanine: step 1/1. In terms of biological role, catalyzes the condensation of pantoate with beta-alanine in an ATP-dependent reaction via a pantoyl-adenylate intermediate. This chain is Pantothenate synthetase, found in Escherichia coli O17:K52:H18 (strain UMN026 / ExPEC).